A 463-amino-acid chain; its full sequence is Glutamate--tRNA ligase 2 (463 aa).

Positions 11–21 (PSPTGYLHIGG) match the 'HIGH' region motif. The 'KMSKS' region motif lies at 240–244 (KLSKR). Position 243 (lysine 243) interacts with ATP.

Belongs to the class-I aminoacyl-tRNA synthetase family. Glutamate--tRNA ligase type 1 subfamily. Monomer.

Its subcellular location is the cytoplasm. The catalysed reaction is tRNA(Glu) + L-glutamate + ATP = L-glutamyl-tRNA(Glu) + AMP + diphosphate. Catalyzes the attachment of glutamate to tRNA(Glu) in a two-step reaction: glutamate is first activated by ATP to form Glu-AMP and then transferred to the acceptor end of tRNA(Glu). In Campylobacter jejuni subsp. jejuni serotype O:6 (strain 81116 / NCTC 11828), this protein is Glutamate--tRNA ligase 2.